Here is a 470-residue protein sequence, read N- to C-terminus: MIKLKNFLNIYNLNYKYQYKNKINLYLIRQGLNINLIKNLSSNIFLYMFIYNFKKYSLKLLNIFKLPDWNFFDCPNINYDNIIYYSSILKDNNLIYYLKNNLNIEFLDSILIKNNSIDIIFDSMSILHTTQYFLKKLGIIFLPLFDIIFKYPLLIKKYLGTIISYKDNFFANINSIIFSEGSFCYIPKYVKCNFNLSTYFKTNSSDFAQFERTLIIVGKYSYVSYLEGCTASLYKESQLHVAIVEIIVKDYGYIKYYTLQNWYRGDYLGNGGLYNFTTKRGICLNYSKLDWIQVEVGSIITWKYPSTILKGKFSISNFYSISFISNMQIADTGSKMYHIGSYTKSYIISKSISLNNSLNIFRGLVYIKPFSYKSYNYTECSSLIFGNNSLTVTIPYIKNYNNTSYVKQEAFVSKIEIIYLFLLMQRGLSISESISLLIIGFCSDIYNKLPFEFNLEIPILFSLKIKDIFN.

The protein belongs to the iron-sulfur cluster assembly SufBD family. In terms of assembly, component of a complex composed of SufB, SufC and SufD in a stoichiometric ratio of 1:2:1. Interacts with SufC. Interacts with SufD.

The protein operates within cofactor biosynthesis; iron-sulfur cluster biosynthesis. Functionally, participates in the sulfur mobilization (SUF) pathway for iron-sulfur (Fe-S) cluster biogenesis. As part of a complex consisting of SufB-SufC(2)-SufD, involved in assembly of [4Fe-4S] clusters. Exhibits ATPase activity. The polypeptide is Iron-sulfur cluster assembly protein SufB (Plasmodium falciparum (isolate 3D7)).